Here is a 133-residue protein sequence, read N- to C-terminus: Small ribosomal subunit protein uS8 (133 aa).

Belongs to the universal ribosomal protein uS8 family. In terms of assembly, part of the 30S ribosomal subunit. Contacts proteins S5 and S12.

Functionally, one of the primary rRNA binding proteins, it binds directly to 16S rRNA central domain where it helps coordinate assembly of the platform of the 30S subunit. In Deinococcus radiodurans (strain ATCC 13939 / DSM 20539 / JCM 16871 / CCUG 27074 / LMG 4051 / NBRC 15346 / NCIMB 9279 / VKM B-1422 / R1), this protein is Small ribosomal subunit protein uS8.